A 37-amino-acid chain; its full sequence is Esculentin-2JDa (37 aa).

Residues C31 and C37 are joined by a disulfide bond.

In terms of tissue distribution, expressed by the skin glands.

It is found in the secreted. In terms of biological role, has antibacterial activity against E.coli and S.aureus strains. The sequence is that of Esculentin-2JDa from Odorrana jingdongensis (Jingdong frog).